The following is a 231-amino-acid chain: NADH-ubiquinone oxidoreductase chain 4 (231 aa).

6 helical membrane passes run Pro1–Ile21, Met34–Leu54, Ile63–Gly85, Ala89–Tyr111, Ile118–Leu138, and Thr169–Leu189.

This sequence belongs to the complex I subunit 4 family.

The protein resides in the mitochondrion membrane. It catalyses the reaction a ubiquinone + NADH + 5 H(+)(in) = a ubiquinol + NAD(+) + 4 H(+)(out). Functionally, core subunit of the mitochondrial membrane respiratory chain NADH dehydrogenase (Complex I) that is believed to belong to the minimal assembly required for catalysis. Complex I functions in the transfer of electrons from NADH to the respiratory chain. The immediate electron acceptor for the enzyme is believed to be ubiquinone. The polypeptide is NADH-ubiquinone oxidoreductase chain 4 (MT-ND4) (Trimeresurus cantori (Cantor's pit viper)).